A 367-amino-acid chain; its full sequence is Indole glucosinolate O-methyltransferase 5 (367 aa).

G209, D232, D252, M253, and K266 together coordinate S-adenosyl-L-homocysteine. Residue H270 is the Proton acceptor of the active site.

The protein belongs to the class I-like SAM-binding methyltransferase superfamily. Cation-independent O-methyltransferase family.

Its pathway is secondary metabolite biosynthesis. Involved in indole glucosinolate biosynthesis. Catalyzes methoxylation reactions of the glucosinolate indole ring. Converts the hydroxy intermediates 4-hydroxy-indol-3-yl-methylglucosinolate (4OH-I3M) and 1-hydroxy-indol-3-yl-methylglucosinolate (1OH-I3M) to 4-methoxy-indol-3-yl-methylglucosinolate (4MO-I3M) and 1-methoxy-indol-3-yl-methylglucosinolate, respectively. This Arabidopsis thaliana (Mouse-ear cress) protein is Indole glucosinolate O-methyltransferase 5.